The sequence spans 280 residues: Shikimate dehydrogenase (NADP(+)) (280 aa).

Shikimate-binding positions include 20–22 (SLS) and Thr67. Lys71 (proton acceptor) is an active-site residue. Glu83 serves as a coordination point for NADP(+). Residues Asn92 and Asp107 each coordinate shikimate. NADP(+) is bound by residues 131–135 (GAGGA), 155–160 (NRTLNK), and Leu224. Residue Tyr226 participates in shikimate binding. Residue Gly247 participates in NADP(+) binding.

The protein belongs to the shikimate dehydrogenase family. Homodimer.

It carries out the reaction shikimate + NADP(+) = 3-dehydroshikimate + NADPH + H(+). It participates in metabolic intermediate biosynthesis; chorismate biosynthesis; chorismate from D-erythrose 4-phosphate and phosphoenolpyruvate: step 4/7. Functionally, involved in the biosynthesis of the chorismate, which leads to the biosynthesis of aromatic amino acids. Catalyzes the reversible NADPH linked reduction of 3-dehydroshikimate (DHSA) to yield shikimate (SA). This is Shikimate dehydrogenase (NADP(+)) from Caldanaerobacter subterraneus subsp. tengcongensis (strain DSM 15242 / JCM 11007 / NBRC 100824 / MB4) (Thermoanaerobacter tengcongensis).